Reading from the N-terminus, the 955-residue chain is Anoctamin-4 (955 aa).

The Cytoplasmic segment spans residues 1–352 (MEASSSGITN…FGEKIGLYFA (352 aa)). The disordered stretch occupies residues 73-97 (KDDDSLLHPGNLTSTSEDTSRLEAG). A helical transmembrane segment spans residues 353-373 (WLGWYTGMLFPAAFIGLFVFL). The Extracellular portion of the chain corresponds to 374-424 (YGVTTLDHCQVSKEVCQATDIIMCPVCDKYCPFMRLSDSCVYAKVTHLFDN). A helical transmembrane segment spans residues 425-445 (GATVFFAVFMAVWATVFLEFW). Residues 446-505 (KRRRAVIAYDWDLIDWEEEEEEIRPQFEAKYSKKERMNPISGKPEPYQAFTDKCSRLIVS) are Cytoplasmic-facing. Residues 506 to 526 (ASGIFFMICVVIAAVFGIVIY) form a helical membrane-spanning segment. Residues 527 to 547 (RVVTVSTFAAFKWALIRNNSQ) lie on the Extracellular side of the membrane. Residue Asn-544 is glycosylated (N-linked (GlcNAc...) asparagine). The helical transmembrane segment at 548 to 568 (VATTGTAVCINFCIIMLLNVL) threads the bilayer. At 569–595 (YEKVALLLTNLEQPRTESEWENSFTLK) the chain is on the cytoplasmic side. Residues 596–616 (MFLFQFVNLNSSTFYIAFFLG) traverse the membrane as a helical segment. The Extracellular segment spans residues 617 to 715 (RFTGHPGAYL…AYGLFDEYLE (99 aa)). A helical transmembrane segment spans residues 716-736 (MILQFGFTTIFVAAFPLAPLL). Residues 737-768 (ALLNNIIEIRLDAYKFVTQWRRPLASRAKDIG) lie on the Cytoplasmic side of the membrane. Residues 769–789 (IWYGILEGIGILSVITNAFVI) form a helical membrane-spanning segment. The Extracellular segment spans residues 790–885 (AITSDFIPRL…QFWHVLAARL (96 aa)). Residues Asn-824 and Asn-837 are each glycosylated (N-linked (GlcNAc...) asparagine). A helical membrane pass occupies residues 886–906 (AFIIVFEHLVFCIKHLISYLI). The Cytoplasmic segment spans residues 907-955 (PDLPKDLRDRMRREKYLIQEMMYEAELERLQKERKERKKNGKAHHNEWP).

Belongs to the anoctamin family. As to expression, predominantly expressed in neuronal tissues. Expressed at low levels in ovary, uterus, heart and brain.

Its subcellular location is the cell membrane. It catalyses the reaction a 1,2-diacyl-sn-glycero-3-phospho-L-serine(in) = a 1,2-diacyl-sn-glycero-3-phospho-L-serine(out). It carries out the reaction a beta-D-galactosyl-(1&lt;-&gt;1')-N-acylsphing-4-enine(out) = a beta-D-galactosyl-(1&lt;-&gt;1')-N-acylsphing-4-enine(in). The catalysed reaction is a 1,2-diacyl-sn-glycero-3-phosphocholine(in) = a 1,2-diacyl-sn-glycero-3-phosphocholine(out). Functionally, has calcium-dependent phospholipid scramblase activity; scrambles phosphatidylserine, phosphatidylcholine and galactosylceramide. Does not exhibit calcium-activated chloride channel (CaCC) activity. This chain is Anoctamin-4, found in Mus musculus (Mouse).